The following is a 298-amino-acid chain: Acetylglutamate kinase (298 aa).

Residues 64-65, Arg86, and Asn195 each bind substrate; that span reads GG.

This sequence belongs to the acetylglutamate kinase family. ArgB subfamily.

Its subcellular location is the cytoplasm. It carries out the reaction N-acetyl-L-glutamate + ATP = N-acetyl-L-glutamyl 5-phosphate + ADP. It functions in the pathway amino-acid biosynthesis; L-arginine biosynthesis; N(2)-acetyl-L-ornithine from L-glutamate: step 2/4. Its function is as follows. Catalyzes the ATP-dependent phosphorylation of N-acetyl-L-glutamate. This Aquifex aeolicus (strain VF5) protein is Acetylglutamate kinase.